The following is a 335-amino-acid chain: Glycerol-3-phosphate dehydrogenase [NAD(P)+] (335 aa).

Residues S12, W13, R33, R34, and K107 each contribute to the NADPH site. Residues K107, G134, and S136 each contribute to the sn-glycerol 3-phosphate site. Residue A138 coordinates NADPH. Sn-glycerol 3-phosphate is bound by residues K189, D242, S252, R253, and N254. K189 serves as the catalytic Proton acceptor. R253 is a binding site for NADPH. The NADPH site is built by V277 and E279.

It belongs to the NAD-dependent glycerol-3-phosphate dehydrogenase family.

The protein resides in the cytoplasm. The catalysed reaction is sn-glycerol 3-phosphate + NAD(+) = dihydroxyacetone phosphate + NADH + H(+). The enzyme catalyses sn-glycerol 3-phosphate + NADP(+) = dihydroxyacetone phosphate + NADPH + H(+). The protein operates within membrane lipid metabolism; glycerophospholipid metabolism. Catalyzes the reduction of the glycolytic intermediate dihydroxyacetone phosphate (DHAP) to sn-glycerol 3-phosphate (G3P), the key precursor for phospholipid synthesis. The polypeptide is Glycerol-3-phosphate dehydrogenase [NAD(P)+] (Moorella thermoacetica (strain ATCC 39073 / JCM 9320)).